Here is a 707-residue protein sequence, read N- to C-terminus: Keratin, type II cytoskeletal 2 epidermal (707 aa).

A disordered region spans residues 1 to 20 (MSCQISCRSRRGGGGGGGGG). A head region spans residues 1 to 198 (MSCQISCRSR…DPEIQNVKSQ (198 aa)). Arginine 22 bears the Asymmetric dimethylarginine mark. Phosphoserine is present on residues serine 25 and serine 28. Residues 29–38 (AVVSGGSRRS) are compositionally biased toward low complexity. The disordered stretch occupies residues 29 to 59 (AVVSGGSRRSNTSFSCISRHGGGRGGSGGGG). The residue at position 52 (arginine 52) is an Omega-N-methylarginine. A Phosphoserine modification is found at serine 64. A coil 1A region spans residues 199–234 (EREQIKTLNNKFASFIDKVRFLEQQNQVLRTKWELL). Residues 199–512 (EREQIKTLNN…KLLEGEECRM (314 aa)) form the IF rod domain. Positions 235 to 253 (QQLDVGSRTTNLDPIFQAY) are linker 1. The coil 1B stretch occupies residues 254–345 (IGMLKKQVDR…TLYDAELSQL (92 aa)). A linker 12 region spans residues 346–369 (QQDVTDTNVILSMDNNRNLDLDSI). The interval 370 to 508 (IAEVQNQYEM…ATYRKLLEGE (139 aa)) is coil 2. The segment at 509 to 707 (ECRMSGDFSD…CGSGVTFSFR (199 aa)) is tail. The tract at residues 531-707 (SSVASKTGFG…CGSGVTFSFR (177 aa)) is disordered. A compositionally biased stretch (gly residues) spans 539-700 (FGSGGQSSGG…GSGSGEGCGS (162 aa)). Omega-N-methylarginine occurs at positions 555, 593, 607, and 675.

The protein belongs to the intermediate filament family. Heterotetramer of two type I and two type II keratins. Associates with KRT10. Expressed predominantly in the suprabasal layers of the plantar epidermis outside of the footpads (at protein level). Expressed in the suprabasal layers of the interfollicular epidermis of the ear, in the interscale regions distant from the hair follicles in the tail, and in the soles of the footpads (at protein level). Expressed mainly in the middle spinous and granular cells of the epidermis of adult tail, nipple and footsole skin. Also found in ear.

The protein resides in the cytoplasm. Its function is as follows. Probably contributes to terminal cornification. Associated with keratinocyte activation, proliferation and keratinization. Required for maintenance of corneocytes and keratin filaments in suprabasal keratinocytes in the epidermis of the ear, potentially via moderation of expression and localization of keratins and their partner proteins. Plays a role in the establishment of the epidermal barrier on plantar skin. This is Keratin, type II cytoskeletal 2 epidermal from Mus musculus (Mouse).